The primary structure comprises 403 residues: Phosphopentomutase (403 aa).

Residues Asp-13, Asp-298, His-303, Asp-339, His-340, and His-351 each coordinate Mn(2+).

Belongs to the phosphopentomutase family. Requires Mn(2+) as cofactor.

The protein localises to the cytoplasm. It carries out the reaction 2-deoxy-alpha-D-ribose 1-phosphate = 2-deoxy-D-ribose 5-phosphate. The catalysed reaction is alpha-D-ribose 1-phosphate = D-ribose 5-phosphate. It functions in the pathway carbohydrate degradation; 2-deoxy-D-ribose 1-phosphate degradation; D-glyceraldehyde 3-phosphate and acetaldehyde from 2-deoxy-alpha-D-ribose 1-phosphate: step 1/2. Its function is as follows. Isomerase that catalyzes the conversion of deoxy-ribose 1-phosphate (dRib-1-P) and ribose 1-phosphate (Rib-1-P) to deoxy-ribose 5-phosphate (dRib-5-P) and ribose 5-phosphate (Rib-5-P), respectively. The polypeptide is Phosphopentomutase (Streptococcus pyogenes serotype M5 (strain Manfredo)).